A 485-amino-acid chain; its full sequence is NADH-quinone oxidoreductase subunit N (485 aa).

14 consecutive transmembrane segments (helical) span residues 8–28 (LIALLPLLIVGLTVVVVMLSI), 35–55 (FLNATLSVIGLNAALVSLWFV), 71–91 (GFAMLYTGLVLLASLATCTFA), 105–125 (FYLLVLIAALGGILLANANHL), 127–147 (SLFLGIELISLPLFGLVGYAF), 159–179 (YTILSAAASSFLLFGMALVYA), 203–223 (LLAGFGLMIVGLGFKLSLVPF), 235–255 (PAPVSTFLATASKIAIFGVVM), 271–291 (VVLAIIAFASIIFGNLMALSQ), 297–317 (LLGYSSISHLGYLLVALIALQ), 326–346 (VGVYLAGYLFSSLGAFGVVSL), 373–393 (AAVMTVMMLSLAGIPMTLGFI), 408–430 (WWLVGAVVVGSAIGLYYYLRVAV), and 455–475 (IVVLISALLVLVLGIWPQPLI).

This sequence belongs to the complex I subunit 2 family. In terms of assembly, NDH-1 is composed of 13 different subunits. Subunits NuoA, H, J, K, L, M, N constitute the membrane sector of the complex.

It localises to the cell inner membrane. It carries out the reaction a quinone + NADH + 5 H(+)(in) = a quinol + NAD(+) + 4 H(+)(out). NDH-1 shuttles electrons from NADH, via FMN and iron-sulfur (Fe-S) centers, to quinones in the respiratory chain. The immediate electron acceptor for the enzyme in this species is believed to be ubiquinone. Couples the redox reaction to proton translocation (for every two electrons transferred, four hydrogen ions are translocated across the cytoplasmic membrane), and thus conserves the redox energy in a proton gradient. The sequence is that of NADH-quinone oxidoreductase subunit N from Escherichia coli O7:K1 (strain IAI39 / ExPEC).